We begin with the raw amino-acid sequence, 414 residues long: Esterase FrsA (414 aa).

This sequence belongs to the FrsA family.

The enzyme catalyses a carboxylic ester + H2O = an alcohol + a carboxylate + H(+). Its function is as follows. Catalyzes the hydrolysis of esters. The chain is Esterase FrsA from Escherichia coli O45:K1 (strain S88 / ExPEC).